Reading from the N-terminus, the 330-residue chain is 4-hydroxythreonine-4-phosphate dehydrogenase (330 aa).

Position 133 (threonine 133) interacts with substrate. 3 residues coordinate a divalent metal cation: histidine 161, histidine 206, and histidine 261. 3 residues coordinate substrate: lysine 269, asparagine 278, and arginine 287.

The protein belongs to the PdxA family. In terms of assembly, homodimer. It depends on Zn(2+) as a cofactor. Mg(2+) serves as cofactor. The cofactor is Co(2+).

Its subcellular location is the cytoplasm. The enzyme catalyses 4-(phosphooxy)-L-threonine + NAD(+) = 3-amino-2-oxopropyl phosphate + CO2 + NADH. It participates in cofactor biosynthesis; pyridoxine 5'-phosphate biosynthesis; pyridoxine 5'-phosphate from D-erythrose 4-phosphate: step 4/5. Its function is as follows. Catalyzes the NAD(P)-dependent oxidation of 4-(phosphooxy)-L-threonine (HTP) into 2-amino-3-oxo-4-(phosphooxy)butyric acid which spontaneously decarboxylates to form 3-amino-2-oxopropyl phosphate (AHAP). This chain is 4-hydroxythreonine-4-phosphate dehydrogenase, found in Xylella fastidiosa (strain Temecula1 / ATCC 700964).